A 367-amino-acid polypeptide reads, in one-letter code: Cystinosin (367 aa).

A signal peptide spans 1-22 (MIRNWLTIFILFPLKLVEKCES). Residues 23–125 (SVSLTVPPVV…LVIRSSAISI (103 aa)) are Lumenal-facing. 3 N-linked (GlcNAc...) (high mannose) asparagine glycosylation sites follow: Asn-36, Asn-41, and Asn-51. An N-linked (GlcNAc...) asparagine glycan is attached at Asn-66. 3 N-linked (GlcNAc...) (high mannose) asparagine glycosylation sites follow: Asn-84, Asn-104, and Asn-107. The 67-residue stretch at 123 to 189 (ISIINQVIGW…LLWVPYIKEQ (67 aa)) folds into the PQ-loop 1 domain. The helical transmembrane segment at 126-150 (INQVIGWIYFVAWSISFYPQVIMNW) threads the bilayer. The Cytoplasmic portion of the chain corresponds to 151 to 159 (RRKSVIGLS). A helical transmembrane segment spans residues 160 to 179 (FDFVALNLTGFVAYSVFNIG). Position 166 (Asn-166) interacts with L-cystine. Residues 180-202 (LLWVPYIKEQFLLKYPNGVNPVN) are Lumenal-facing. A helical transmembrane segment spans residues 203–225 (SNDVFFSLHAVVLTLIIIVQCCL). Residue Asp-205 coordinates H(+). At 226-234 (YERGGQRVS) the chain is on the cytoplasmic side. Residues 235–257 (WPAIGFLVLAWLFAFVTMIVAAV) traverse the membrane as a helical segment. Topologically, residues 258–263 (GVTTWL) are lumenal. Positions 263–328 (LQFLFCFSYI…QSYNNDQWTL (66 aa)) constitute a PQ-loop 2 domain. The helical transmembrane segment at 264–289 (QFLFCFSYIKLAVTLVKYFPQAYMNF) threads the bilayer. 3 residues coordinate L-cystine: Lys-273, Lys-280, and Tyr-281. At 290 to 298 (YYKSTEGWS) the chain is on the cytoplasmic side. The helical transmembrane segment at 299–308 (IGNVLLDFTG) threads the bilayer. 2 residues coordinate L-cystine: Asn-301 and Asp-305. Asp-305 lines the H(+) pocket. Residues 309 to 331 (GSFSLLQMFLQSYNNDQWTLIFG) lie on the Lumenal side of the membrane. Residues 332–354 (DPTKFGLGVFSIVFDVVFFIQHF) form a helical membrane-spanning segment. Residue Asp-346 participates in H(+) binding. Topologically, residues 355–367 (CLYRKRPGYDQLN) are cytoplasmic. The Lysosomal targeting motif signature appears at 362–366 (GYDQL).

It belongs to the cystinosin family. In terms of assembly, interacts with components of the V-ATPase complex. Interacts with components of the Ragulator complex. Interacts with RRAGA/RagA and RRAGC/RagC. Interacts with AP-3 complex subunit mu (AP3M1 or AP3M2). In terms of tissue distribution, strongly expressed in pancreas, kidney (adult and fetal), skeletal muscle, melanocytes and keratinocytes. Expressed at lower levels in placenta and heart. Weakly expressed in lung, liver and brain (adult and fetal). Represents 5-20 % of CTNS transcripts, with the exception of the testis that expresses both isoforms in equal proportions.

Its subcellular location is the lysosome membrane. It is found in the melanosome membrane. It localises to the cell membrane. The enzyme catalyses L-cystine(out) + H(+)(out) = L-cystine(in) + H(+)(in). With respect to regulation, switches between a lumen- and a cytosol-open conformation: pH induces conformational changes and shifts the equilibrium to facilitate the transition between the lumen- and cytosol-open conformation, thereby promoting cystine transport. Protonation of specific aspartate residues (Asp-205, Asp-305 and Asp-346) favors the cytosol-open conformation. Functionally, cystine/H(+) symporter that mediates export of cystine, the oxidized dimer of cysteine, from lysosomes. Plays an important role in melanin synthesis by catalyzing cystine export from melanosomes, possibly by inhibiting pheomelanin synthesis. In addition to cystine export, also acts as a positive regulator of mTORC1 signaling in kidney proximal tubular cells, via interactions with components of the v-ATPase and Ragulator complexes. Also involved in small GTPase-regulated vesicle trafficking and lysosomal localization of LAMP2A, independently of cystine transporter activity. This chain is Cystinosin, found in Homo sapiens (Human).